Reading from the N-terminus, the 452-residue chain is Probable ECA polymerase (452 aa).

The next 11 helical transmembrane spans lie at 6 to 26 (FSGLLVVWLLSTLFIATLTWF), 37 to 57 (VFFSLLFLLTFFFGFPLTSVL), 63 to 83 (VGVAPPEILLQALLSAACFYG), 118 to 138 (VILMGIALVSVAIFFMHNGFL), 155 to 175 (GVALKRFFYFFIPAMLVVYFL), 181 to 201 (AWLFFLVSTVAFGLLTYMIVG), 207 to 227 (IIIAFAIFLFIGIIRGWISLW), 228 to 248 (MLAAAGVLGIVGMFWLALKRY), 341 to 361 (LVVMGGALFIPLGAIVVGLII), 378 to 398 (YKAAILHSFCFGAIFNMIVLV), and 410 to 430 (VFFLVVFGASLLVAKLLFWLF).

Belongs to the WzyE family. As to quaternary structure, probably part of a complex composed of WzxE, WzyE and WzzE.

Its subcellular location is the cell inner membrane. It functions in the pathway bacterial outer membrane biogenesis; enterobacterial common antigen biosynthesis. Functionally, probably involved in the polymerization of enterobacterial common antigen (ECA) trisaccharide repeat units. The sequence is that of Probable ECA polymerase from Salmonella gallinarum (strain 287/91 / NCTC 13346).